The following is a 681-amino-acid chain: Elongation factor G (681 aa).

Residues 5 to 279 form the tr-type G domain; the sequence is KNIRNIGIIA…SIVNFLPSPI (275 aa). GTP is bound by residues 14 to 21, 82 to 86, and 136 to 139; these read AHVDAGKT, DTPGH, and NKLD.

This sequence belongs to the TRAFAC class translation factor GTPase superfamily. Classic translation factor GTPase family. EF-G/EF-2 subfamily.

It localises to the cytoplasm. Functionally, catalyzes the GTP-dependent ribosomal translocation step during translation elongation. During this step, the ribosome changes from the pre-translocational (PRE) to the post-translocational (POST) state as the newly formed A-site-bound peptidyl-tRNA and P-site-bound deacylated tRNA move to the P and E sites, respectively. Catalyzes the coordinated movement of the two tRNA molecules, the mRNA and conformational changes in the ribosome. The protein is Elongation factor G of Carsonella ruddii (strain PV).